The chain runs to 415 residues: Gamma-glutamyl phosphate reductase (415 aa).

This sequence belongs to the gamma-glutamyl phosphate reductase family.

It localises to the cytoplasm. The enzyme catalyses L-glutamate 5-semialdehyde + phosphate + NADP(+) = L-glutamyl 5-phosphate + NADPH + H(+). Its pathway is amino-acid biosynthesis; L-proline biosynthesis; L-glutamate 5-semialdehyde from L-glutamate: step 2/2. Catalyzes the NADPH-dependent reduction of L-glutamate 5-phosphate into L-glutamate 5-semialdehyde and phosphate. The product spontaneously undergoes cyclization to form 1-pyrroline-5-carboxylate. The polypeptide is Gamma-glutamyl phosphate reductase (Mycobacterium bovis (strain BCG / Pasteur 1173P2)).